The sequence spans 219 residues: Large ribosomal subunit protein uL3 (219 aa).

Q151 is modified (N5-methylglutamine).

The protein belongs to the universal ribosomal protein uL3 family. Part of the 50S ribosomal subunit. Forms a cluster with proteins L14 and L19. In terms of processing, methylated by PrmB.

Its function is as follows. One of the primary rRNA binding proteins, it binds directly near the 3'-end of the 23S rRNA, where it nucleates assembly of the 50S subunit. This chain is Large ribosomal subunit protein uL3, found in Blochmanniella floridana.